The chain runs to 273 residues: Bifunctional protein FolD (273 aa).

NADP(+) is bound by residues 152–154, Thr179, and Ile220; that span reads GRS.

Belongs to the tetrahydrofolate dehydrogenase/cyclohydrolase family. As to quaternary structure, homodimer.

The catalysed reaction is (6R)-5,10-methylene-5,6,7,8-tetrahydrofolate + NADP(+) = (6R)-5,10-methenyltetrahydrofolate + NADPH. The enzyme catalyses (6R)-5,10-methenyltetrahydrofolate + H2O = (6R)-10-formyltetrahydrofolate + H(+). It functions in the pathway one-carbon metabolism; tetrahydrofolate interconversion. Functionally, catalyzes the oxidation of 5,10-methylenetetrahydrofolate to 5,10-methenyltetrahydrofolate and then the hydrolysis of 5,10-methenyltetrahydrofolate to 10-formyltetrahydrofolate. The protein is Bifunctional protein FolD of Petrotoga mobilis (strain DSM 10674 / SJ95).